Here is a 161-residue protein sequence, read N- to C-terminus: Nucleotide-binding protein Bxeno_A3642 (161 aa).

Belongs to the YajQ family.

Functionally, nucleotide-binding protein. In Paraburkholderia xenovorans (strain LB400), this protein is Nucleotide-binding protein Bxeno_A3642.